A 149-amino-acid chain; its full sequence is Large ribosomal subunit protein eL8 (149 aa).

Belongs to the eukaryotic ribosomal protein eL8 family. In terms of assembly, part of the 50S ribosomal subunit. Probably part of the RNase P complex.

Its subcellular location is the cytoplasm. Functionally, multifunctional RNA-binding protein that recognizes the K-turn motif in ribosomal RNA, the RNA component of RNase P, box H/ACA, box C/D and box C'/D' sRNAs. This Pyrobaculum calidifontis (strain DSM 21063 / JCM 11548 / VA1) protein is Large ribosomal subunit protein eL8.